Consider the following 543-residue polypeptide: CBS domain-containing protein CBSCBSPB1 (543 aa).

A disordered region spans residues 1–35 (MASQGGPRRSLSVTTASLHGKKKSMDMAERGLDTG). Position 17 is a phosphoserine (serine 17). Positions 23–35 (KSMDMAERGLDTG) are enriched in basic and acidic residues. CBS domains are found at residues 59–118 (RLSK…NVEE), 125–183 (MTKN…RAAE), 225–285 (IIPD…LPPS), and 293–350 (MTQN…AGTT). The tract at residues 372 to 393 (LSPNEDDEDSRSESSMKVASEA) is disordered. A PB1 domain is found at 402-489 (ANTFSFKIED…KSLRLHLDDS (88 aa)). The helical transmembrane segment at 518–538 (AYSGVAAGAALVAGLGFMAFL) threads the bilayer.

Its subcellular location is the membrane. This Arabidopsis thaliana (Mouse-ear cress) protein is CBS domain-containing protein CBSCBSPB1 (CBSCBSPB1).